The following is a 331-amino-acid chain: (+)-aristolochene synthase TS1 (331 aa).

The segment at Met-1–Gly-22 is disordered. A compositionally biased stretch (low complexity) spans Ser-7–Gly-16. Asp-102, Asn-231, Ser-235, and Glu-239 together coordinate Mg(2+). Residues Asp-102–Glu-106 carry the DDxx(x)D/E motif motif. The NDxxSxxxD/E motif motif lies at Asn-231–Glu-239. (2E,6E)-farnesyl diphosphate contacts are provided by Arg-326 and Tyr-327.

It belongs to the terpene synthase family. As to quaternary structure, homodimer. It depends on Mg(2+) as a cofactor.

It catalyses the reaction (2E,6E)-farnesyl diphosphate = (+)-aristolochene + diphosphate. It functions in the pathway sesquiterpene biosynthesis; aristolochene biosynthesis; aristolochene from farnesyl diphosphate: step 1/1. In terms of biological role, catalyzes the cyclization of trans,trans-farnesyl diphosphate (FPP) to the bicyclic sesquiterpene aristolochene. Aristolochene is the likely parent compound for a number of sesquiterpenoid toxins produced by filamentous fungi. The chain is (+)-aristolochene synthase TS1 from Penicillium expansum (Blue mold rot fungus).